The chain runs to 249 residues: 1-(5-phosphoribosyl)-5-[(5-phosphoribosylamino)methylideneamino] imidazole-4-carboxamide isomerase (249 aa).

The active-site Proton acceptor is the aspartate 10. The active-site Proton donor is the aspartate 131.

This sequence belongs to the HisA/HisF family.

It is found in the cytoplasm. It carries out the reaction 1-(5-phospho-beta-D-ribosyl)-5-[(5-phospho-beta-D-ribosylamino)methylideneamino]imidazole-4-carboxamide = 5-[(5-phospho-1-deoxy-D-ribulos-1-ylimino)methylamino]-1-(5-phospho-beta-D-ribosyl)imidazole-4-carboxamide. It participates in amino-acid biosynthesis; L-histidine biosynthesis; L-histidine from 5-phospho-alpha-D-ribose 1-diphosphate: step 4/9. This chain is 1-(5-phosphoribosyl)-5-[(5-phosphoribosylamino)methylideneamino] imidazole-4-carboxamide isomerase, found in Brevibacillus brevis (strain 47 / JCM 6285 / NBRC 100599).